The primary structure comprises 593 residues: ETS-related transcription factor Elf-2 (593 aa).

S107 is subject to Phosphoserine. Residues 146-201 (VEVSTEESEPMDTSPIPTSPDSHEPMKKKKVGRKPKTQQSPISNGSPELGIKKKPR) are disordered. Residues 171–181 (MKKKKVGRKPK) are compositionally biased toward basic residues. Phosphothreonine is present on T182. Over residues 182-191 (TQQSPISNGS) the composition is skewed to polar residues. Phosphoserine occurs at positions 185 and 191. Residues 208 to 290 (TYLWEFLLDL…EGQRLVYQFK (83 aa)) constitute a DNA-binding region (ETS). A phosphoserine mark is found at S363 and S372. T376 bears the Phosphothreonine mark. S430 is modified (phosphoserine). R494 bears the Omega-N-methylarginine mark. A Phosphothreonine modification is found at T521. Residue K536 forms a Glycyl lysine isopeptide (Lys-Gly) (interchain with G-Cter in SUMO2) linkage.

This sequence belongs to the ETS family. Interacts with the LIM domains of LMO2. Interacts via its N-terminal region with RUNX1. As to expression, expressed in all fetal and adult tissues examined. Among fetal tissues, highest levels of expression detected in heart, lung, liver and kidney, and lower levels in brain. Among adult tissues, highest levels of expression detected in heart, placenta, lung, skeletal muscle, spleen, thymus, testis and ovary. Moderate expression in prostate, small intestine, kidney, liver and pancreas, and weak expression in colon, brain and peripheral blood lymphocytes.

The protein resides in the nucleus. Isoform 1 transcriptionally activates the LYN and BLK promoters and acts synergistically with RUNX1 to transactivate the BLK promoter. Its function is as follows. Isoform 2 may function in repression of RUNX1-mediated transactivation. The polypeptide is ETS-related transcription factor Elf-2 (Homo sapiens (Human)).